The sequence spans 82 residues: Diphthamide biosynthesis protein 3 (82 aa).

The DPH-type MB domain maps to 3-59 (TYDEIEIEDMTFEPENQMFTYPCPCGDRFQIYLDDMFEGEKVAVCPSCSLMIDVVFD). The Fe cation site is built by cysteine 25, cysteine 27, cysteine 47, and cysteine 50. The required for interaction with the elongator complex stretch occupies residues 66 to 82 (YYEEAGIHPPEPIAAAA).

It belongs to the DPH3 family. As to quaternary structure, component of the 2-(3-amino-3-carboxypropyl)histidine synthase complex composed of DPH1, DPH2, KTI11/DPH3 and a NADH-dependent reductase, predominantly CBR1. Interacts with DPH1. Interacts with DPH2. Interacts with CBR1. Interacts with elongation factor 2. Interacts with ATS1/KTI13; the interaction is direct. Interacts with the 40S ribosomal protein RPS7A. Interacts with the 40S ribosomal protein RPS19A. Interacts with the elongator complex subunit IKI3/ELP1. Interacts with the elongator complex subunit ELP2. Interacts with the elongator complex subunit ELP3. Interacts with the elongator complex subunit ELP5.

It is found in the cytoplasm. The protein localises to the nucleus. The catalysed reaction is [3Fe-4S](1+)-[protein] + Fe(2+)-[Dph3] = [3Fe-4S](0)-[protein] + Fe(3+)-[Dph3]. It carries out the reaction 2 [3Fe-4S](0)-[protein] + 2 Fe(2+)-[Dph3] + NADH = 2 [4Fe-4S](1+)-[protein] + 2 [Dph3] + NAD(+) + H(+). Its pathway is protein modification; peptidyl-diphthamide biosynthesis. Functionally, required for the first step of diphthamide biosynthesis, a post-translational modification of histidine which occurs in elongation factor 2. DPH1 and DPH2 transfer a 3-amino-3-carboxypropyl (ACP) group from S-adenosyl-L-methionine (SAM) to a histidine residue, the reaction is assisted by a reduction system comprising KTI11/DPH3 and a NADH-dependent reductase, predominantly CBR1. Acts as an electron donor to reduce the Fe-S cluster in DPH1-DPH2 keeping the [4Fe-4S] clusters in the active and reduced state. Restores iron to DPH1-DPH2 iron-sulfur clusters which have degraded from [4Fe-4S] to [3Fe-4S] by donating an iron atom to reform [4Fe-4S] clusters, in a manner dependent on the presence of elongation factor 2 and SAM. Together with ATS1; associates with the elongator complex and is required for tRNA Wobble base modifications mediated by the elongator complex. The elongator complex is required for multiple tRNA modifications, including mcm5U (5-methoxycarbonylmethyl uridine), mcm5s 2U (5-methoxycarbonylmethyl-2-thiouridine), and ncm5U (5-carbamoylmethyl uridine). This Saccharomyces cerevisiae (strain ATCC 204508 / S288c) (Baker's yeast) protein is Diphthamide biosynthesis protein 3.